The chain runs to 188 residues: Elongation factor P (188 aa).

This sequence belongs to the elongation factor P family.

It is found in the cytoplasm. It participates in protein biosynthesis; polypeptide chain elongation. In terms of biological role, involved in peptide bond synthesis. Stimulates efficient translation and peptide-bond synthesis on native or reconstituted 70S ribosomes in vitro. Probably functions indirectly by altering the affinity of the ribosome for aminoacyl-tRNA, thus increasing their reactivity as acceptors for peptidyl transferase. The protein is Elongation factor P of Rickettsia canadensis (strain McKiel).